A 90-amino-acid polypeptide reads, in one-letter code: Putative membrane protein insertion efficiency factor (90 aa).

Belongs to the UPF0161 family.

The protein localises to the cell membrane. In terms of biological role, could be involved in insertion of integral membrane proteins into the membrane. This is Putative membrane protein insertion efficiency factor from Lactococcus lactis subsp. cremoris (strain SK11).